We begin with the raw amino-acid sequence, 434 residues long: MMNTRVWCKIIGMLALLVWLVSSPSVFAVLTIEITGGTEAALPIAIVPFQNEGSTPPENVAAVIAADLARSGRFAPLPEEDLISRPRNASDIQFQDWRRLGSEGLVIGKVISLGADRYEVRFQLFDIYKEEQLVGRRYQVPAAGLRHLAHQIADLIYETLTGEKGIFTTHIAFVTVSRAAHGAKQYSLQVADVDGHNPHTILRSKEPILSPAWSPDGTQLAYVSFERRRSEVFVQELRTGQRQSVASFSGINSAPDWSPDGGKLALVLSKEGNPEIYIRDLATGRLTRLTHNTAIDTEPAWAPDGGSIVFTSDRGGRPQLYQIPVSGGRAQRLTFDGAYNASASFAPDGRRLALIHGDKGQFHIAVLNLQSKELQVLTETRMDESPSFAPNGRMILYATSSPQGGVLAAVSTDGRVRQRLAQQGDEVREPAWSP.

The signal sequence occupies residues 1-28 (MMNTRVWCKIIGMLALLVWLVSSPSVFA).

Belongs to the TolB family. In terms of assembly, the Tol-Pal system is composed of five core proteins: the inner membrane proteins TolA, TolQ and TolR, the periplasmic protein TolB and the outer membrane protein Pal. They form a network linking the inner and outer membranes and the peptidoglycan layer.

The protein localises to the periplasm. Part of the Tol-Pal system, which plays a role in outer membrane invagination during cell division and is important for maintaining outer membrane integrity. In Nitrosococcus oceani (strain ATCC 19707 / BCRC 17464 / JCM 30415 / NCIMB 11848 / C-107), this protein is Tol-Pal system protein TolB.